Consider the following 327-residue polypeptide: Annexin A8 (327 aa).

Annexin repeat units follow at residues 21–92 (FNPD…ALMY), 93–164 (PPYR…CLLQ), 177–249 (GLAL…TVVK), and 253–324 (NLHG…NLVG). Residues M266, G268, G270, and D310 each contribute to the Ca(2+) site.

The protein belongs to the annexin family.

This protein is an anticoagulant protein that acts as an indirect inhibitor of the thromboplastin-specific complex, which is involved in the blood coagulation cascade. This is Annexin A8 (ANXA8) from Bos taurus (Bovine).